The primary structure comprises 98 residues: Integration host factor subunit alpha (98 aa).

Residues 49–71 (FGNFDLRDKNQRPGRNPKTGEDI) are disordered.

It belongs to the bacterial histone-like protein family. As to quaternary structure, heterodimer of an alpha and a beta chain.

In terms of biological role, this protein is one of the two subunits of integration host factor, a specific DNA-binding protein that functions in genetic recombination as well as in transcriptional and translational control. This chain is Integration host factor subunit alpha, found in Shewanella sp. (strain MR-4).